Here is a 103-residue protein sequence, read N- to C-terminus: Putative membrane protein insertion efficiency factor (103 aa).

Belongs to the UPF0161 family.

It localises to the cell inner membrane. Could be involved in insertion of integral membrane proteins into the membrane. This chain is Putative membrane protein insertion efficiency factor, found in Chlamydia pneumoniae (Chlamydophila pneumoniae).